The following is a 210-amino-acid chain: Ribonuclease HII (210 aa).

Positions 18-207 (RFVAGVDEVG…VHKILCKEET (190 aa)) constitute an RNase H type-2 domain. Residues Asp-24, Glu-25, and Asp-115 each contribute to the a divalent metal cation site.

Belongs to the RNase HII family. The cofactor is Mn(2+). Mg(2+) serves as cofactor.

The protein localises to the cytoplasm. It catalyses the reaction Endonucleolytic cleavage to 5'-phosphomonoester.. In terms of biological role, endonuclease that specifically degrades the RNA of RNA-DNA hybrids. The polypeptide is Ribonuclease HII (Paracoccus denitrificans (strain Pd 1222)).